Consider the following 205-residue polypeptide: Urease accessory protein UreE (205 aa).

Over residues 170–192 (EHHGHSHSHSHDHDHDHDHDHQH) the composition is skewed to basic and acidic residues. Residues 170–205 (EHHGHSHSHSHDHDHDHDHDHQHGPCCSHGHHHGHR) are disordered.

The protein belongs to the UreE family.

Its subcellular location is the cytoplasm. In terms of biological role, involved in urease metallocenter assembly. Binds nickel. Probably functions as a nickel donor during metallocenter assembly. The chain is Urease accessory protein UreE from Burkholderia pseudomallei (strain 668).